Here is a 172-residue protein sequence, read N- to C-terminus: Adenine phosphoribosyltransferase (172 aa).

This sequence belongs to the purine/pyrimidine phosphoribosyltransferase family. Homodimer.

The protein resides in the cytoplasm. It catalyses the reaction AMP + diphosphate = 5-phospho-alpha-D-ribose 1-diphosphate + adenine. It participates in purine metabolism; AMP biosynthesis via salvage pathway; AMP from adenine: step 1/1. Functionally, catalyzes a salvage reaction resulting in the formation of AMP, that is energically less costly than de novo synthesis. This is Adenine phosphoribosyltransferase from Clostridium kluyveri (strain NBRC 12016).